The sequence spans 133 residues: Large ribosomal subunit protein uL15 (133 aa).

The disordered stretch occupies residues 1 to 62 (MALHNLQPAP…GQQPLQRRLP (62 aa)). A compositionally biased stretch (polar residues) spans 32–45 (TRGQKGQKSRTGYS).

The protein belongs to the universal ribosomal protein uL15 family. In terms of assembly, part of the 50S ribosomal subunit.

Binds to the 23S rRNA. The sequence is that of Large ribosomal subunit protein uL15 from Nitratiruptor sp. (strain SB155-2).